Consider the following 1488-residue polypeptide: Chromosome partition protein MukB (1488 aa).

ATP is bound at residue 34–41 (GGNGAGKS). 3 coiled-coil regions span residues 326-418 (LEAD…QYNQ), 444-472 (LDTFQAKEQEATEKLLSLEQKMSVAQTAH), and 509-602 (RHLA…QRAP). Residues 666-783 (PGGAEDQRLN…SLPIFGRAAR (118 aa)) form a flexible hinge region. Coiled-coil stretches lie at residues 835-923 (EAEI…AKLE), 977-1116 (EMLS…AKAG), and 1209-1265 (VEAI…LQSV). Positions 1049–1074 (ADSGAEERARQRRDELHAQLSNNRSR) are disordered. The span at 1051 to 1065 (SGAEERARQRRDELH) shows a compositional bias: basic and acidic residues.

This sequence belongs to the SMC family. MukB subfamily. In terms of assembly, homodimerization via its hinge domain. Binds to DNA via its C-terminal region. Interacts, and probably forms a ternary complex, with MukE and MukF via its C-terminal region. The complex formation is stimulated by calcium or magnesium. Interacts with tubulin-related protein FtsZ.

The protein resides in the cytoplasm. The protein localises to the nucleoid. In terms of biological role, plays a central role in chromosome condensation, segregation and cell cycle progression. Functions as a homodimer, which is essential for chromosome partition. Involved in negative DNA supercoiling in vivo, and by this means organize and compact chromosomes. May achieve or facilitate chromosome segregation by condensation DNA from both sides of a centrally located replisome during cell division. This is Chromosome partition protein MukB from Salmonella paratyphi A (strain ATCC 9150 / SARB42).